Reading from the N-terminus, the 190-residue chain is A-type ATP synthase subunit E (190 aa).

Belongs to the V-ATPase E subunit family. In terms of assembly, has multiple subunits with at least A(3), B(3), C, D, E, F, H, I and proteolipid K(x).

Its subcellular location is the cell membrane. Its function is as follows. Component of the A-type ATP synthase that produces ATP from ADP in the presence of a proton gradient across the membrane. The polypeptide is A-type ATP synthase subunit E (Pyrobaculum islandicum (strain DSM 4184 / JCM 9189 / GEO3)).